The following is a 358-amino-acid chain: Photosystem II protein D1 (358 aa).

A run of 3 helical transmembrane segments spans residues 28 to 45 (YVGW…AAAI), 117 to 132 (HFLI…QWEL), and 141 to 155 (WICV…AAFA). Residue His-117 participates in chlorophyll a binding. A pheophytin a-binding site is contributed by Trp-125. Residues Asp-169 and Glu-188 each coordinate [CaMn4O5] cluster. The chain crosses the membrane as a helical span at residues 196 to 217 (FHMIGVAGMFGGSLFSAMHGSL). His-197 is a binding site for chlorophyll a. A quinone is bound by residues His-214 and 263-264 (SF). Position 214 (His-214) interacts with Fe cation. His-271 serves as a coordination point for Fe cation. A helical membrane pass occupies residues 273 to 287 (FLAAWPVICIWITSL). 4 residues coordinate [CaMn4O5] cluster: His-331, Glu-332, Asp-341, and Ala-343. A propeptide spanning residues 344-358 (AAESTPVALIAPAIG) is cleaved from the precursor.

This sequence belongs to the reaction center PufL/M/PsbA/D family. In terms of assembly, PSII is composed of 1 copy each of membrane proteins PsbA, PsbB, PsbC, PsbD, PsbE, PsbF, PsbH, PsbI, PsbJ, PsbK, PsbL, PsbM, PsbT, PsbX, PsbY, Psb30/Ycf12, peripheral proteins PsbO, CyanoQ (PsbQ), PsbU, PsbV and a large number of cofactors. It forms dimeric complexes. The cofactor is The D1/D2 heterodimer binds P680, chlorophylls that are the primary electron donor of PSII, and subsequent electron acceptors. It shares a non-heme iron and each subunit binds pheophytin, quinone, additional chlorophylls, carotenoids and lipids. D1 provides most of the ligands for the Mn4-Ca-O5 cluster of the oxygen-evolving complex (OEC). There is also a Cl(-1) ion associated with D1 and D2, which is required for oxygen evolution. The PSII complex binds additional chlorophylls, carotenoids and specific lipids.. Tyr-160 forms a radical intermediate that is referred to as redox-active TyrZ, YZ or Y-Z. Post-translationally, C-terminally processed by CtpA; processing is essential to allow assembly of the oxygen-evolving complex and thus photosynthetic growth.

It localises to the cellular thylakoid membrane. It catalyses the reaction 2 a plastoquinone + 4 hnu + 2 H2O = 2 a plastoquinol + O2. Its function is as follows. Photosystem II (PSII) is a light-driven water:plastoquinone oxidoreductase that uses light energy to abstract electrons from H(2)O, generating O(2) and a proton gradient subsequently used for ATP formation. It consists of a core antenna complex that captures photons, and an electron transfer chain that converts photonic excitation into a charge separation. The D1/D2 (PsbA/PsbD) reaction center heterodimer binds P680, the primary electron donor of PSII as well as several subsequent electron acceptors. This chain is Photosystem II protein D1, found in Prochlorococcus marinus (strain MIT 9313).